Reading from the N-terminus, the 273-residue chain is Zinc finger protein 80 (273 aa).

2 consecutive C2H2-type zinc fingers follow at residues Y49–H71 and Y77–H99. The C2H2-type 3; atypical zinc finger occupies C105–H127. 4 consecutive C2H2-type zinc fingers follow at residues Y133 to H155, F161 to H183, Y189 to H211, and Y217 to H239.

The protein belongs to the krueppel C2H2-type zinc-finger protein family.

Its subcellular location is the nucleus. Functionally, may be involved in transcriptional regulation. This chain is Zinc finger protein 80 (ZNF80), found in Gorilla gorilla gorilla (Western lowland gorilla).